A 196-amino-acid polypeptide reads, in one-letter code: Elongation factor Ts (196 aa).

The segment at 80 to 83 (TDFV) is involved in Mg(2+) ion dislocation from EF-Tu.

It belongs to the EF-Ts family. In terms of assembly, heterotetramer composed of two EF-Ts.EF-Tu dimer complexes.

It is found in the cytoplasm. In terms of biological role, associates with the EF-Tu.GDP complex and induces the exchange of GDP to GTP. It remains bound to the aminoacyl-tRNA.EF-Tu.GTP complex up to the GTP hydrolysis stage on the ribosome. The sequence is that of Elongation factor Ts (tsf) from Thermus thermophilus (strain ATCC 27634 / DSM 579 / HB8).